The chain runs to 62 residues: DNA-directed RNA polymerase subunit Rpo10 (62 aa).

Positions 6, 9, 43, and 44 each coordinate Zn(2+).

The protein belongs to the archaeal Rpo10/eukaryotic RPB10 RNA polymerase subunit family. Part of the RNA polymerase complex. Zn(2+) serves as cofactor.

It localises to the cytoplasm. It carries out the reaction RNA(n) + a ribonucleoside 5'-triphosphate = RNA(n+1) + diphosphate. DNA-dependent RNA polymerase (RNAP) catalyzes the transcription of DNA into RNA using the four ribonucleoside triphosphates as substrates. The protein is DNA-directed RNA polymerase subunit Rpo10 of Methanosphaerula palustris (strain ATCC BAA-1556 / DSM 19958 / E1-9c).